An 896-amino-acid chain; its full sequence is Valine--tRNA ligase (896 aa).

A 'HIGH' region motif is present at residues proline 43–histidine 53. The 'KMSKS' region signature appears at lysine 545–serine 549. Residue lysine 548 coordinates ATP. The stretch at aspartate 831–leucine 857 forms a coiled coil.

This sequence belongs to the class-I aminoacyl-tRNA synthetase family. ValS type 1 subfamily. In terms of assembly, monomer.

Its subcellular location is the cytoplasm. It catalyses the reaction tRNA(Val) + L-valine + ATP = L-valyl-tRNA(Val) + AMP + diphosphate. Its function is as follows. Catalyzes the attachment of valine to tRNA(Val). As ValRS can inadvertently accommodate and process structurally similar amino acids such as threonine, to avoid such errors, it has a 'posttransfer' editing activity that hydrolyzes mischarged Thr-tRNA(Val) in a tRNA-dependent manner. The chain is Valine--tRNA ligase from Rhizorhabdus wittichii (strain DSM 6014 / CCUG 31198 / JCM 15750 / NBRC 105917 / EY 4224 / RW1) (Sphingomonas wittichii).